Reading from the N-terminus, the 308-residue chain is Quinolinate synthase (308 aa).

Residues His-21 and Ser-38 each contribute to the iminosuccinate site. Cys-83 contacts [4Fe-4S] cluster. Iminosuccinate-binding positions include 109-111 (YIN) and Ser-126. Cys-170 is a [4Fe-4S] cluster binding site. Residues 196 to 198 (HPE) and Thr-213 contribute to the iminosuccinate site. Cys-263 lines the [4Fe-4S] cluster pocket.

The protein belongs to the quinolinate synthase family. Type 2 subfamily. [4Fe-4S] cluster serves as cofactor.

It is found in the cytoplasm. The enzyme catalyses iminosuccinate + dihydroxyacetone phosphate = quinolinate + phosphate + 2 H2O + H(+). It participates in cofactor biosynthesis; NAD(+) biosynthesis; quinolinate from iminoaspartate: step 1/1. In terms of biological role, catalyzes the condensation of iminoaspartate with dihydroxyacetone phosphate to form quinolinate. The polypeptide is Quinolinate synthase (Sulfurisphaera tokodaii (strain DSM 16993 / JCM 10545 / NBRC 100140 / 7) (Sulfolobus tokodaii)).